The chain runs to 569 residues: Protein misato homolog 1 (569 aa).

Residues S41 and S495 each carry the phosphoserine modification.

This sequence belongs to the misato family.

The protein resides in the mitochondrion outer membrane. It localises to the cytoplasm. Its function is as follows. Involved in the regulation of mitochondrial distribution and morphology. Required for mitochondrial fusion and mitochondrial network formation. The chain is Protein misato homolog 1 (MSTO1) from Macaca fascicularis (Crab-eating macaque).